Reading from the N-terminus, the 826-residue chain is Villin-1 (826 aa).

The segment at 1-734 (MVELSKKVTG…YDELKAELGD (734 aa)) is core. The Gelsolin-like 1 repeat unit spans residues 27–76 (MEMVPVPTKSYGNFYEGDCYVLLSTRKTGSGFSYNIHYWLGKNSSQDEQG). Position 112-119 (112-119 (KQGLIYKQ)) interacts with a 1,2-diacyl-sn-glycero-3-phospho-(1D-myo-inositol-4,5-bisphosphate). The interval 129-137 (VETNTYNVQ) is crucial for binding an actin filament. Residue 138 to 146 (RLLHVKGKK) participates in a 1,2-diacyl-sn-glycero-3-phospho-(1D-myo-inositol-4,5-bisphosphate) binding. 5 Gelsolin-like repeats span residues 148 to 188 (VVAA…AERL), 265 to 309 (LVIQ…EEKQ), 408 to 457 (QELV…DELA), 528 to 568 (TKAF…DERE), and 631 to 672 (FLAT…SEKE). The interval 735 to 826 (NASIGQLVSG…QNLKKEKGLF (92 aa)) is headpiece. An HP domain is found at 760 to 826 (PTKLETFPLD…QNLKKEKGLF (67 aa)). The interval 820-823 (KKEK) is absolutely required for activity.

The protein belongs to the villin/gelsolin family. As to quaternary structure, monomer. Homodimer. Associates with F-actin; the association with F-actin is inhibited by tropomyosin. In terms of processing, phosphorylated on tyrosine residues. The unphosphorylated form increases the initial rate of actin-nucleating activity, whereas the tyrosine-phosphorylated form inhibits actin-nucleating activity, enhances actin-bundling activity and enhances actin-severing activity by reducing high Ca(2+) requirements. The tyrosine-phosphorylated form does not regulate actin-capping activity. Tyrosine phosphorylation is essential for cell migration: tyrosine phosphorylation sites in the N-terminus half regulate actin reorganization and cell morphology, whereas tyrosine phosphorylation sites in the C-terminus half regulate cell migration. Tyrosine phosphorylation is induced by epidermal growth factor (EGF) and stimulates cell migration. In terms of tissue distribution, specifically expressed in epithelial cells. Component of brush border microvilli.

The protein resides in the cytoplasm. It localises to the cytoskeleton. Its subcellular location is the cell projection. The protein localises to the microvillus. It is found in the lamellipodium. The protein resides in the ruffle. It localises to the filopodium tip. Its subcellular location is the filopodium. Epithelial cell-specific Ca(2+)-regulated actin-modifying protein that modulates the reorganization of microvillar actin filaments. Plays a role in the actin nucleation, actin filament bundle assembly, actin filament capping and severing. Binds phosphatidylinositol 4,5-bisphosphate (PIP2) and lysophosphatidic acid (LPA); binds LPA with higher affinity than PIP2. Binding to LPA increases its phosphorylation by SRC and inhibits all actin-modifying activities. Binding to PIP2 inhibits actin-capping and -severing activities but enhances actin-bundling activity. Regulates the intestinal epithelial cell morphology, cell invasion, cell migration and apoptosis. Protects against apoptosis induced by dextran sodium sulfate (DSS) in the gastrointestinal epithelium. Appears to regulate cell death by maintaining mitochondrial integrity. Enhances hepatocyte growth factor (HGF)-induced epithelial cell motility, chemotaxis and wound repair. Its actin-bundling activity is inhibited by tropomyosin. The protein is Villin-1 (VIL1) of Gallus gallus (Chicken).